Reading from the N-terminus, the 256-residue chain is Putative transcription factor 001R (256 aa).

In terms of biological role, transcription activation. The sequence is that of Putative transcription factor 001R from Frog virus 3 (isolate Goorha) (FV-3).